We begin with the raw amino-acid sequence, 102 residues long: Small ribosomal subunit protein uS10 (102 aa).

This sequence belongs to the universal ribosomal protein uS10 family. In terms of assembly, part of the 30S ribosomal subunit.

Its function is as follows. Involved in the binding of tRNA to the ribosomes. The sequence is that of Small ribosomal subunit protein uS10 from Caulobacter sp. (strain K31).